The chain runs to 470 residues: Dihydrolipoyl dehydrogenase (470 aa).

FAD-binding positions include 39-47 (EKATLGGVC), lysine 56, and alanine 119. Cysteines 47 and 52 form a disulfide. Residues 183–187 (GGGYI), glutamate 206, and 272–275 (TVGR) contribute to the NAD(+) site. The FAD site is built by aspartate 315 and alanine 323. Catalysis depends on histidine 447, which acts as the Proton acceptor.

It belongs to the class-I pyridine nucleotide-disulfide oxidoreductase family. In terms of assembly, homodimer. Component of two multienzyme complexes: pyruvate dehydrogenase complex and oxoglutarate dehydrogenase complex. FAD is required as a cofactor.

Its subcellular location is the cytoplasm. It catalyses the reaction N(6)-[(R)-dihydrolipoyl]-L-lysyl-[protein] + NAD(+) = N(6)-[(R)-lipoyl]-L-lysyl-[protein] + NADH + H(+). Functionally, catalyzes the oxidation of dihydrolipoamide to lipoamide. The protein is Dihydrolipoyl dehydrogenase (pdhD) of Bacillus subtilis (strain 168).